The sequence spans 413 residues: S-adenosylmethionine synthase (413 aa).

Position 15 (H15) interacts with ATP. Mg(2+) is bound at residue D17. K(+) is bound at residue E43. Residues E56 and Q100 each coordinate L-methionine. Positions 100–110 (QSPDISQGVNE) are flexible loop. Residues 171–173 (DGK), 248–249 (KF), D257, 263–264 (RK), A280, and K284 each bind ATP. D257 contacts L-methionine. K288 contributes to the L-methionine binding site.

This sequence belongs to the AdoMet synthase family. Homotetramer; dimer of dimers. It depends on Mg(2+) as a cofactor. Requires K(+) as cofactor.

It localises to the cytoplasm. It carries out the reaction L-methionine + ATP + H2O = S-adenosyl-L-methionine + phosphate + diphosphate. It participates in amino-acid biosynthesis; S-adenosyl-L-methionine biosynthesis; S-adenosyl-L-methionine from L-methionine: step 1/1. In terms of biological role, catalyzes the formation of S-adenosylmethionine (AdoMet) from methionine and ATP. The overall synthetic reaction is composed of two sequential steps, AdoMet formation and the subsequent tripolyphosphate hydrolysis which occurs prior to release of AdoMet from the enzyme. The polypeptide is S-adenosylmethionine synthase (Prochlorococcus marinus (strain AS9601)).